Here is a 119-residue protein sequence, read N- to C-terminus: Ribonuclease P protein component (119 aa).

A disordered region spans residues 1–24 (MRGSSRFRPHEKLRASDDYQRVKR). Over residues 8–21 (RPHEKLRASDDYQR) the composition is skewed to basic and acidic residues.

Belongs to the RnpA family. As to quaternary structure, consists of a catalytic RNA component (M1 or rnpB) and a protein subunit.

It catalyses the reaction Endonucleolytic cleavage of RNA, removing 5'-extranucleotides from tRNA precursor.. In terms of biological role, RNaseP catalyzes the removal of the 5'-leader sequence from pre-tRNA to produce the mature 5'-terminus. It can also cleave other RNA substrates such as 4.5S RNA. The protein component plays an auxiliary but essential role in vivo by binding to the 5'-leader sequence and broadening the substrate specificity of the ribozyme. This Syntrophobacter fumaroxidans (strain DSM 10017 / MPOB) protein is Ribonuclease P protein component.